We begin with the raw amino-acid sequence, 68 residues long: Phage-like element PBSX protein XtrA (68 aa).

This sequence to B.subtilis YqaO.

This is Phage-like element PBSX protein XtrA (xtrA) from Bacillus subtilis (strain 168).